We begin with the raw amino-acid sequence, 449 residues long: Phosphoglucosamine mutase (449 aa).

The Phosphoserine intermediate role is filled by Ser101. Positions 101, 241, 243, and 245 each coordinate Mg(2+). Ser101 carries the post-translational modification Phosphoserine.

It belongs to the phosphohexose mutase family. Mg(2+) serves as cofactor. Activated by phosphorylation.

It carries out the reaction alpha-D-glucosamine 1-phosphate = D-glucosamine 6-phosphate. In terms of biological role, catalyzes the conversion of glucosamine-6-phosphate to glucosamine-1-phosphate. The protein is Phosphoglucosamine mutase of Acetivibrio thermocellus (strain ATCC 27405 / DSM 1237 / JCM 9322 / NBRC 103400 / NCIMB 10682 / NRRL B-4536 / VPI 7372) (Clostridium thermocellum).